The following is a 615-amino-acid chain: Protein translocase subunit SecD (615 aa).

The next 6 membrane-spanning stretches (helical) occupy residues Tyr10–Gly30, Gln452–Tyr472, Leu477–Leu497, Met504–Ile524, Tyr546–Tyr568, and Gly585–Tyr605.

The protein belongs to the SecD/SecF family. SecD subfamily. Forms a complex with SecF. Part of the essential Sec protein translocation apparatus which comprises SecA, SecYEG and auxiliary proteins SecDF-YajC and YidC.

The protein localises to the cell inner membrane. Functionally, part of the Sec protein translocase complex. Interacts with the SecYEG preprotein conducting channel. SecDF uses the proton motive force (PMF) to complete protein translocation after the ATP-dependent function of SecA. The sequence is that of Protein translocase subunit SecD from Salmonella choleraesuis (strain SC-B67).